We begin with the raw amino-acid sequence, 89 residues long: Small ribosomal subunit protein uS15 (89 aa).

This sequence belongs to the universal ribosomal protein uS15 family. As to quaternary structure, part of the 30S ribosomal subunit. Forms a bridge to the 50S subunit in the 70S ribosome, contacting the 23S rRNA.

One of the primary rRNA binding proteins, it binds directly to 16S rRNA where it helps nucleate assembly of the platform of the 30S subunit by binding and bridging several RNA helices of the 16S rRNA. Its function is as follows. Forms an intersubunit bridge (bridge B4) with the 23S rRNA of the 50S subunit in the ribosome. This Methylocella silvestris (strain DSM 15510 / CIP 108128 / LMG 27833 / NCIMB 13906 / BL2) protein is Small ribosomal subunit protein uS15.